We begin with the raw amino-acid sequence, 627 residues long: Probable inactive L-type lectin-domain containing receptor kinase III.1 (627 aa).

The first 23 residues, M1–S23, serve as a signal peptide directing secretion. Topologically, residues Q24–M303 are extracellular. The segment at E26 to N262 is legume-lectin like. N-linked (GlcNAc...) asparagine glycosylation is found at N57, N78, N127, N184, N202, N209, and N230. The tract at residues I272 to K297 is disordered. Pro residues predominate over residues L278–P292. N300 carries N-linked (GlcNAc...) asparagine glycosylation. The helical transmembrane segment at L304–F324 threads the bilayer. The Cytoplasmic segment spans residues W325–V627. The Protein kinase domain occupies F353–L623. ATP contacts are provided by residues L359–F367 and K381.

In the C-terminal section; belongs to the protein kinase superfamily. Ser/Thr protein kinase family. It in the N-terminal section; belongs to the leguminous lectin family.

It localises to the cell membrane. The sequence is that of Probable inactive L-type lectin-domain containing receptor kinase III.1 (LECRK31) from Arabidopsis thaliana (Mouse-ear cress).